The chain runs to 217 residues: Guanylate kinase (217 aa).

In terms of domain architecture, Guanylate kinase-like spans 10-190; the sequence is GLLIILSSPS…TEEALKTIIT (181 aa). Residue 17–24 participates in ATP binding; it reads SPSGAGKS.

This sequence belongs to the guanylate kinase family.

It is found in the cytoplasm. The catalysed reaction is GMP + ATP = GDP + ADP. Essential for recycling GMP and indirectly, cGMP. The chain is Guanylate kinase from Ruegeria sp. (strain TM1040) (Silicibacter sp.).